A 369-amino-acid chain; its full sequence is Peptide chain release factor 2 (369 aa).

At Q249 the chain carries N5-methylglutamine.

The protein belongs to the prokaryotic/mitochondrial release factor family. In terms of processing, methylated by PrmC. Methylation increases the termination efficiency of RF2.

It is found in the cytoplasm. Peptide chain release factor 2 directs the termination of translation in response to the peptide chain termination codons UGA and UAA. This Thermosipho africanus (strain TCF52B) protein is Peptide chain release factor 2.